We begin with the raw amino-acid sequence, 351 residues long: Trace amine-associated receptor 2 (351 aa).

Topologically, residues Met-1–Ser-48 are extracellular. Asn-24 and Asn-30 each carry an N-linked (GlcNAc...) asparagine glycan. Disulfide bonds link Cys-33-Cys-197 and Cys-116-Cys-201. Residues Phe-49 to Ser-69 form a helical membrane-spanning segment. Residues Tyr-70–Asn-79 lie on the Cytoplasmic side of the membrane. A helical membrane pass occupies residues Phe-80–Ser-100. The Extracellular portion of the chain corresponds to Met-101–Ile-118. A helical membrane pass occupies residues Tyr-119–Ile-139. Topologically, residues Asp-140–Arg-162 are cytoplasmic. A helical membrane pass occupies residues Leu-163–Ala-183. At Tyr-184–Lys-207 the chain is on the extracellular side. A helical membrane pass occupies residues Leu-208–Ile-228. At Tyr-229–Thr-263 the chain is on the cytoplasmic side. A helical membrane pass occupies residues Leu-264–Leu-284. Residues Asp-285–Ala-299 are Extracellular-facing. Asn-289 is a glycosylation site (N-linked (GlcNAc...) asparagine). A helical membrane pass occupies residues Leu-300–Phe-322. Topologically, residues Arg-323–Glu-351 are cytoplasmic.

This sequence belongs to the G-protein coupled receptor 1 family. In terms of tissue distribution, not expressed in the pons, thalamus, hypothalamus, hippocampus, caudate, putamen, frontal cortex, basal forebrain, midbrain or liver.

The protein resides in the cell membrane. Functionally, orphan olfactory receptor specific for trace amines. Trace amine compounds are enriched in animal body fluids and act on trace amine-associated receptors (TAARs) to elicit both intraspecific and interspecific innate behaviors. Ligand-binding causes a conformation change that triggers signaling via the G(s)-class of G-proteins which activate adenylate cyclase. This is Trace amine-associated receptor 2 from Homo sapiens (Human).